Here is a 338-residue protein sequence, read N- to C-terminus: Protein FosB (338 aa).

2 disordered regions span residues 1–54 (MFQA…PGSF) and 80–179 (AQSQ…RREL). Composition is skewed to polar residues over residues 13-31 (SRCS…SVDS) and 102-112 (TSYSTPGLSAY). Phosphoserine is present on Ser-27. Residues 123-137 (PSTSTTTSGPVSARP) show a composition bias toward low complexity. One can recognise a bZIP domain in the interval 155 to 218 (EEKRRVRRER…ERLEFVLVAH (64 aa)). Residues 157 to 182 (KRRVRRERNKLAAAKCRNRRRELTDR) form a basic motif region. The leucine-zipper stretch occupies residues 183-211 (LQAETDQLEEEKAELESEIAELQKEKERL). Disordered stretches follow at residues 222–276 (CKIP…PPNL) and 316–338 (GAQR…LLAL). The span at 256–265 (LPPPPPPPLP) shows a compositional bias: pro residues. 2 stretches are compositionally biased toward polar residues: residues 266–276 (FQSSRDAPPNL) and 318–338 (QRTS…LLAL).

It belongs to the bZIP family. Fos subfamily. As to quaternary structure, heterodimer; binds to DNA as heterodimer. Component of an AP-1 transcription factor complex; composed of FOS-JUN heterodimers. As part of the AP-1 transcription factor complex, forms heterodimers with JUN, JUNB or JUND, thereby binding to the AP-1 consensus sequence and stimulating transcription. Interacts with the BAF multiprotein chromatin-remodeling complex subunits SMARCB1 and SMARCD1. Interacts with ARID1A and JUN. Homodimer under oxidizing conditions and monomer under reducing conditions (in vitro). Heterodimer; binds to DNA as heterodimer. Forms heterodimers with JUNB, JUN or JUND; thereby binding to the AP-1 consensus sequence but does not stimulate transcription. Forms heterodimers with JUND under oxidizing conditions. In terms of processing, phosphorylated. Post-translationally, phosphorylated at Ser-27 by CSNK2A1; phosphorylation increases protein stability and transactivation potential. As to expression, expressed in brain, including the preoptic area of the hypothalamus, the main and accessory olfactory bulbs, the pyriform cortex and the hippocampus (at protein level). Expressed in the neurons of the subgranular zone of the dentate gyrus in the hippocampus (at protein level). Expressed in pyramidal cells in CA1 and CA3, in the dentate gyrus and the nucleus accumbens of the striatum (at protein level). Expressed in the core and shell of the nucleus accumbens of the striatum (at protein level). Expressed in the neurons of the subgranular zone of the dentate gyrus in the hippocampus (at protein level).

It is found in the nucleus. In terms of biological role, heterodimerizes with proteins of the JUN family to form an AP-1 transcription factor complex, thereby enhancing their DNA binding activity to gene promoters containing an AP-1 consensus sequence 5'-TGA[GC]TCA-3' and enhancing their transcriptional activity. As part of the AP-1 complex, facilitates enhancer selection together with cell-type-specific transcription factors by collaboratively binding to nucleosomal enhancers and recruiting the SWI/SNF (BAF) chromatin remodeling complex to establish accessible chromatin. Together with JUN, plays a role in activation-induced cell death of T cells by binding to the AP-1 promoter site of FASLG/CD95L, and inducing its transcription in response to activation of the TCR/CD3 signaling pathway. Exhibits transactivation activity in vitro. Involved in the display of nurturing behavior towards newborns. May play a role in neurogenesis in the hippocampus and in learning and memory-related tasks by regulating the expression of various genes involved in neurogenesis, depression and epilepsy. Implicated in behavioral responses related to morphine reward and spatial memory. Exhibits lower transactivation activity than isoform 1 in vitro. The heterodimer with JUN does not display any transcriptional activity, and may thereby act as an transcriptional inhibitor. May be involved in the regulation of neurogenesis in the hippocampus. May play a role in synaptic modifications in nucleus accumbens medium spiny neurons and thereby play a role in adaptive and pathological reward-dependent learning, including maladaptive responses involved in drug addiction. Seems to be more stably expressed with a half-life of ~9.5 hours in cell culture as compared to 1.5 hours half-life of isoform 1. This is Protein FosB from Mus musculus (Mouse).